The following is a 159-amino-acid chain: Small ribosomal subunit protein uS7 (159 aa).

This sequence belongs to the universal ribosomal protein uS7 family. Part of the 30S ribosomal subunit. Contacts proteins S9 and S11.

One of the primary rRNA binding proteins, it binds directly to 16S rRNA where it nucleates assembly of the head domain of the 30S subunit. Is located at the subunit interface close to the decoding center, probably blocks exit of the E-site tRNA. This is Small ribosomal subunit protein uS7 from Sulfurihydrogenibium sp. (strain YO3AOP1).